Consider the following 449-residue polypeptide: Cyclin-B1-5 (449 aa).

Disordered regions lie at residues 1-37 and 98-147; these read MATRHQRAAAAPQPANRGAAVAAGKQKAAATAAAGRP and PARK…GGSA. Low complexity-rich tracts occupy residues 8–37 and 136–147; these read AAAAPQPANRGAAVAAGKQKAAATAAAGRP and SEGAGSSSGGSA.

This sequence belongs to the cyclin family. Cyclin AB subfamily.

The chain is Cyclin-B1-5 (CYCB1-5) from Oryza sativa subsp. japonica (Rice).